The following is a 395-amino-acid chain: uncharacterized protein (395 aa).

The N-terminal stretch at 1-18 is a signal peptide; the sequence is MKHVIMLYFIAAATLFSS. Cys-19 carries the N-palmitoyl cysteine lipid modification. Cys-19 carries S-diacylglycerol cysteine lipidation.

It localises to the cell outer membrane. Its function is as follows. May be involved in ulvan degradation. Ulvan is the main polysaccharide component of the Ulvales (green seaweed) cell wall. It is composed of disaccharide building blocks comprising 3-sulfated rhamnose (Rha3S) linked to D-glucuronic acid (GlcA), L-iduronic acid (IduA), or D-xylose (Xyl). This is an uncharacterized protein from Formosa agariphila (strain DSM 15362 / KCTC 12365 / LMG 23005 / KMM 3901 / M-2Alg 35-1).